We begin with the raw amino-acid sequence, 156 residues long: dCTP deaminase (156 aa).

Residues 79–84, Asp95, Gln124, and Tyr138 each bind dCTP; that span reads RSSLAR.

This sequence belongs to the dCTP deaminase family. As to quaternary structure, homotrimer.

It catalyses the reaction dCTP + H2O + H(+) = dUTP + NH4(+). It participates in pyrimidine metabolism; dUMP biosynthesis; dUMP from dCTP (dUTP route): step 1/2. In terms of biological role, catalyzes the deamination of dCTP to dUTP. The protein is dCTP deaminase of Pyrococcus furiosus (strain ATCC 43587 / DSM 3638 / JCM 8422 / Vc1).